The primary structure comprises 124 residues: Large ribosomal subunit protein uL14 (124 aa).

The protein belongs to the universal ribosomal protein uL14 family. Part of the 50S ribosomal subunit. Forms a cluster with proteins L3 and L19. In the 70S ribosome, L14 and L19 interact and together make contacts with the 16S rRNA in bridges B5 and B8.

In terms of biological role, binds to 23S rRNA. Forms part of two intersubunit bridges in the 70S ribosome. This Mycoplasmoides gallisepticum (strain R(low / passage 15 / clone 2)) (Mycoplasma gallisepticum) protein is Large ribosomal subunit protein uL14.